Consider the following 297-residue polypeptide: UTP--glucose-1-phosphate uridylyltransferase (297 aa).

It belongs to the UDPGP type 2 family.

The enzyme catalyses alpha-D-glucose 1-phosphate + UTP + H(+) = UDP-alpha-D-glucose + diphosphate. It functions in the pathway carbohydrate metabolism; nucleotide-sugar metabolism. It participates in bacterial outer membrane biogenesis; lipopolysaccharide biosynthesis. In Escherichia coli O157:H7, this protein is UTP--glucose-1-phosphate uridylyltransferase (galF).